Reading from the N-terminus, the 479-residue chain is G-rich sequence factor 1 (479 aa).

The N-terminal 116 residues, 1-116 (MAGTRWVLGA…AAAAGPARGY (116 aa)), are a transit peptide targeting the mitochondrion. 2 RRM domains span residues 149–245 (YLIR…PSPV) and 249–325 (GVVR…PSRR). At Ser-243 the chain carries Phosphoserine. Ser-334 is modified (phosphoserine). The RRM 3 domain maps to 400–479 (HFVHMRGLPF…LFLNSCPKGK (80 aa)).

As to quaternary structure, monomer. Found in a complex with DDX28, DHX30, FASTKD2 and FASTKD5. Interacts with the mitochondrial RNase P complex subunit TRMT10C/MRPP1. Interacts with the 2 components of the mitochondrial degradosome complex, PNPT1 and SUPV3L1, in an RNA-dependent manner.

The protein localises to the mitochondrion matrix. In terms of biological role, regulator of post-transcriptional mitochondrial gene expression, required for assembly of the mitochondrial ribosome and for recruitment of mRNA and lncRNA. Binds RNAs containing the 14 base G-rich element. Preferentially binds RNAs transcribed from three contiguous genes on the light strand of mtDNA, the ND6 mRNA, and the long non-coding RNAs for MT-CYB and MT-ND5, each of which contains multiple consensus binding sequences. Involved in the degradosome-mediated decay of non-coding mitochondrial transcripts (MT-ncRNA) and tRNA-like molecules. Acts by unwinding G-quadruplex RNA structures in MT-ncRNA, thus facilitating their degradation by the degradosome. G-quadruplexes (G4) are non-canonical 4 stranded structures formed by transcripts from the light strand of mtDNA. The protein is G-rich sequence factor 1 (Grsf1) of Mus musculus (Mouse).